The chain runs to 444 residues: Protein translocase subunit SecY (444 aa).

The next 10 membrane-spanning stretches (helical) occupy residues 24–44 (FFVI…IPGI), 77–97 (ILAL…LLTV), 123–143 (GTLV…PNMV), 153–173 (MFTL…MWLG), 181–201 (IGNG…PKAI), 215–235 (VLLL…VVFM), 269–289 (MAGV…GTLA), 318–338 (YVML…ALVF), 376–396 (LAGA…MVAW), and 400–420 (FYFG…FMAQ).

This sequence belongs to the SecY/SEC61-alpha family. In terms of assembly, component of the Sec protein translocase complex. Heterotrimer consisting of SecY, SecE and SecG subunits. The heterotrimers can form oligomers, although 1 heterotrimer is thought to be able to translocate proteins. Interacts with the ribosome. Interacts with SecDF, and other proteins may be involved. Interacts with SecA.

It localises to the cell inner membrane. Its function is as follows. The central subunit of the protein translocation channel SecYEG. Consists of two halves formed by TMs 1-5 and 6-10. These two domains form a lateral gate at the front which open onto the bilayer between TMs 2 and 7, and are clamped together by SecE at the back. The channel is closed by both a pore ring composed of hydrophobic SecY resides and a short helix (helix 2A) on the extracellular side of the membrane which forms a plug. The plug probably moves laterally to allow the channel to open. The ring and the pore may move independently. In Vibrio cholerae serotype O1 (strain ATCC 39315 / El Tor Inaba N16961), this protein is Protein translocase subunit SecY.